A 504-amino-acid polypeptide reads, in one-letter code: Pentatricopeptide repeat-containing protein At1g05600 (504 aa).

12 PPR repeats span residues 45 to 79 (NGSV…SCEC), 80 to 114 (KDSV…NCVN), 115 to 145 (WSLS…YCYG), 151 to 185 (RITA…GCYP), 186 to 216 (DRDS…MFWR), 225 to 259 (DIVV…GLKA), 260 to 296 (PKRC…GAIP), 297 to 331 (CLDS…GFEP), 332 to 367 (TPFI…HCLP), 368 to 398 (TVGV…MSKQ), 404 to 438 (NEET…SHFP), and 439 to 473 (GVET…DMVP).

The protein belongs to the PPR family. P subfamily.

This is Pentatricopeptide repeat-containing protein At1g05600 from Arabidopsis thaliana (Mouse-ear cress).